The chain runs to 535 residues: RAN GTPase-activating protein 1 (535 aa).

A WPP region spans residues 1-115 (MDHSAKTTQN…EESEVEVSKD (115 aa)). LRR repeat units follow at residues 208–231 (GSKL…AFAS), 236–259 (QHDL…AVRE), 264–287 (TDKI…AIAE), 320–343 (CSHL…ALAK), 353–376 (EIYM…LLKS), 377–400 (APSL…NLAA), 405–428 (KQSL…LIAK), 433–456 (HDQL…ALAQ), and 461–488 (KNTF…MFKD). Residues 493 to 535 (LVPLDDNDPEGEDFEDEDEEEEGEDGNELESKLGSLKIKQGEE) are disordered. Residues 497 to 520 (DDNDPEGEDFEDEDEEEEGEDGNE) show a composition bias toward acidic residues.

The protein belongs to the RNA1 family. In terms of assembly, homodimer. Interacts with WIP1 through its WPP domain. Component of Ran complexes at least composed of WIT1 or WIT2, RANGAP1 or RANGAP2, and WIP1 or WIP2 or WIP3. Interacts directly with WIT1, WIP2 and WIP3. Interacts with POK1.

Its subcellular location is the cytoplasm. It localises to the nucleus envelope. The protein resides in the nucleus membrane. The protein localises to the cytoskeleton. It is found in the spindle. Its subcellular location is the phragmoplast. Functionally, GTPase activator for the nuclear Ras-related regulatory protein Ran, converting it to the putatively inactive GDP-bound state. Plays a role in spatial signaling during cell division. This chain is RAN GTPase-activating protein 1 (RANGAP1), found in Arabidopsis thaliana (Mouse-ear cress).